The following is a 1088-amino-acid chain: DNA mismatch repair protein MutS (1088 aa).

Residues 498–579 are disordered; that stretch reads PLDGITPPDD…SFEMPSLHGH (82 aa). Acidic residues predominate over residues 537-546; it reads DLFDEEEEQE. Residue 816–823 participates in ATP binding; that stretch reads GPNMSGKS. The segment at 1000-1048 is disordered; the sequence is LERRAPRSTPQPAPERTEERPAAGRPTARSHSAARGDPPRAPDGQLSLF.

It belongs to the DNA mismatch repair MutS family.

In terms of biological role, this protein is involved in the repair of mismatches in DNA. It is possible that it carries out the mismatch recognition step. This protein has a weak ATPase activity. This is DNA mismatch repair protein MutS from Roseiflexus castenholzii (strain DSM 13941 / HLO8).